Here is a 39-residue protein sequence, read N- to C-terminus: Cytochrome b559 subunit beta (39 aa).

A helical membrane pass occupies residues 14-30 (WLAVHGLAVPTVFFLGA). Residue H18 coordinates heme.

Belongs to the PsbE/PsbF family. In terms of assembly, heterodimer of an alpha subunit and a beta subunit. PSII is composed of 1 copy each of membrane proteins PsbA, PsbB, PsbC, PsbD, PsbE, PsbF, PsbH, PsbI, PsbJ, PsbK, PsbL, PsbM, PsbT, PsbX, PsbY, PsbZ, Psb30/Ycf12, at least 3 peripheral proteins of the oxygen-evolving complex and a large number of cofactors. It forms dimeric complexes. It depends on heme b as a cofactor.

The protein localises to the plastid. The protein resides in the chloroplast thylakoid membrane. Functionally, this b-type cytochrome is tightly associated with the reaction center of photosystem II (PSII). PSII is a light-driven water:plastoquinone oxidoreductase that uses light energy to abstract electrons from H(2)O, generating O(2) and a proton gradient subsequently used for ATP formation. It consists of a core antenna complex that captures photons, and an electron transfer chain that converts photonic excitation into a charge separation. The polypeptide is Cytochrome b559 subunit beta (Physcomitrium patens (Spreading-leaved earth moss)).